The chain runs to 91 residues: Long neurotoxin LNTX28 (91 aa).

Residues 1 to 21 form the signal peptide; sequence MKTLLLTLVVMTIVCLDLGYT. 5 disulfide bridges follow: C24–C41, C34–C62, C47–C51, C66–C77, and C78–C83.

This sequence belongs to the three-finger toxin family. Long-chain subfamily. Type II alpha-neurotoxin sub-subfamily. As to expression, expressed by the venom gland.

The protein resides in the secreted. In terms of biological role, binds with high affinity to muscular (alpha-1/CHRNA1) and neuronal (alpha-7/CHRNA7) nicotinic acetylcholine receptor (nAChR) and inhibits acetylcholine from binding to the receptor, thereby impairing neuromuscular and neuronal transmission. This Ophiophagus hannah (King cobra) protein is Long neurotoxin LNTX28.